A 40-amino-acid chain; its full sequence is Photosystem II reaction center protein J (40 aa).

The helical transmembrane segment at 8-28 (IPLWLIGTVTGILVIGLIGVF) threads the bilayer.

Belongs to the PsbJ family. As to quaternary structure, PSII is composed of 1 copy each of membrane proteins PsbA, PsbB, PsbC, PsbD, PsbE, PsbF, PsbH, PsbI, PsbJ, PsbK, PsbL, PsbM, PsbT, PsbX, PsbY, PsbZ, Psb30/Ycf12, at least 3 peripheral proteins of the oxygen-evolving complex and a large number of cofactors. It forms dimeric complexes.

The protein resides in the plastid. Its subcellular location is the chloroplast thylakoid membrane. In terms of biological role, one of the components of the core complex of photosystem II (PSII). PSII is a light-driven water:plastoquinone oxidoreductase that uses light energy to abstract electrons from H(2)O, generating O(2) and a proton gradient subsequently used for ATP formation. It consists of a core antenna complex that captures photons, and an electron transfer chain that converts photonic excitation into a charge separation. This chain is Photosystem II reaction center protein J, found in Nymphaea alba (White water-lily).